A 273-amino-acid polypeptide reads, in one-letter code: SAGA-associated factor 29 homolog B (273 aa).

The region spanning 128–273 is the SGF29 C-terminal domain; sequence EAYASLKGEQ…VVALPEGHRQ (146 aa). Histone H3K4me3 N-terminus binding regions lie at residues 171-173 and 220-223; these read DEE and GTTA. Residues 245 to 248 form a histone H3K4me3 binding region; sequence FDDD.

Belongs to the SGF29 family. Expressed in roots, rosette leaves, cauline leaves, stems and flowers.

It localises to the nucleus. Chromatin reader component of the transcription regulatory histone acetylation (HAT) complex SAGA. In Arabidopsis thaliana (Mouse-ear cress), this protein is SAGA-associated factor 29 homolog B.